Here is a 131-residue protein sequence, read N- to C-terminus: MQKIDKTLEEWRAMLDPAQYQVCRLKGTERPFSGKYNSERRDGVYHCICCDLPLFDSKAKFDSGCGWPSFYEPIEEAAMIEIRDTSHGMIRTEVTCAQCDAHLGHVFPDGPPPTGLRYCINSVCLDLKPRD.

The MsrB domain maps to 8 to 130 (LEEWRAMLDP…NSVCLDLKPR (123 aa)). Positions 47, 50, 96, and 99 each coordinate Zn(2+). The active-site Nucleophile is the C119.

This sequence belongs to the MsrB Met sulfoxide reductase family. Zn(2+) is required as a cofactor.

It carries out the reaction L-methionyl-[protein] + [thioredoxin]-disulfide + H2O = L-methionyl-(R)-S-oxide-[protein] + [thioredoxin]-dithiol. This Pseudomonas entomophila (strain L48) protein is Peptide methionine sulfoxide reductase MsrB.